The chain runs to 498 residues: Pyruvate kinase (498 aa).

R53 contacts substrate. 4 residues coordinate K(+): N55, S57, D87, and T88. 55 to 58 (NFSH) lines the ATP pocket. ATP is bound by residues R94 and K178. Position 240 (E240) interacts with Mg(2+). Residues G263, D264, and T296 each coordinate substrate. D264 contributes to the Mg(2+) binding site.

Belongs to the pyruvate kinase family. Homotetramer. The cofactor is Mg(2+). It depends on K(+) as a cofactor.

The enzyme catalyses pyruvate + ATP = phosphoenolpyruvate + ADP + H(+). It participates in carbohydrate degradation; glycolysis; pyruvate from D-glyceraldehyde 3-phosphate: step 5/5. The sequence is that of Pyruvate kinase (PYK) from Trypanoplasma borreli.